Here is a 116-residue protein sequence, read N- to C-terminus: Iron-sulfur cluster insertion protein ErpA (116 aa).

C44, C108, and C110 together coordinate iron-sulfur cluster.

It belongs to the HesB/IscA family. Homodimer. Iron-sulfur cluster serves as cofactor.

In terms of biological role, required for insertion of 4Fe-4S clusters for at least IspG. This is Iron-sulfur cluster insertion protein ErpA from Shewanella denitrificans (strain OS217 / ATCC BAA-1090 / DSM 15013).